The chain runs to 154 residues: Superoxide dismutase [Cu-Zn] (154 aa).

Cu cation contacts are provided by His-47, His-49, and His-64. A disulfide bridge links Cys-58 with Cys-147. Positions 64, 72, 81, and 84 each coordinate Zn(2+). A Cu cation-binding site is contributed by His-121. Over residues 125–136 (DDLGKGGNEESL) the composition is skewed to basic and acidic residues. The interval 125–144 (DDLGKGGNEESLKTGNAGPR) is disordered. Residue Arg-144 coordinates substrate.

Belongs to the Cu-Zn superoxide dismutase family. In terms of assembly, homodimer. The cofactor is Cu cation. It depends on Zn(2+) as a cofactor.

It is found in the cytoplasm. The catalysed reaction is 2 superoxide + 2 H(+) = H2O2 + O2. Its function is as follows. Destroys radicals which are normally produced within the cells and which are toxic to biological systems. In Cordyceps tenuipes (Entomopathogenic fungus), this protein is Superoxide dismutase [Cu-Zn] (SOD1).